We begin with the raw amino-acid sequence, 251 residues long: Chorismate mutase (251 aa).

In terms of domain architecture, Chorismate mutase spans 1–251; the sequence is MSLVNEKLKL…EVDYLLARLL (251 aa). L-tyrosine is bound by residues Arg-74, Arg-75, Asn-134, Gly-136, and Ser-137. L-tryptophan contacts are provided by Asn-134, Gly-136, and Ser-137.

As to quaternary structure, homodimer.

Its subcellular location is the cytoplasm. It catalyses the reaction chorismate = prephenate. It participates in metabolic intermediate biosynthesis; prephenate biosynthesis; prephenate from chorismate: step 1/1. Its activity is regulated as follows. Each dimer has two allosteric binding sites that can bind the regulatory effectors tryptophan or tyrosine. Can bind either one tryptophan or one tyrosine, two tryptophan or two tyrosine or one tryptophan and one tyrosine, which differentially affect the catalytic activity. Activated by tryptophan and subject to feedback inhibition by tyrosine. In the presence of both tryptophan and tyrosine, the enzyme is in the activated state. Catalyzes the Claisen rearrangement of chorismate to prephenate. Acts at the first branch point in the aromatic amino acid pathway where it steers biosynthesis towards phenylalanine and tyrosine, and away from tryptophan. The sequence is that of Chorismate mutase from Schizosaccharomyces pombe (strain 972 / ATCC 24843) (Fission yeast).